The sequence spans 251 residues: Probable-ribose 5-phosphate isomerase (251 aa).

This sequence belongs to the ribose 5-phosphate isomerase family.

It carries out the reaction aldehydo-D-ribose 5-phosphate = D-ribulose 5-phosphate. Its pathway is carbohydrate degradation; pentose phosphate pathway; D-ribose 5-phosphate from D-ribulose 5-phosphate (non-oxidative stage): step 1/1. This is Probable-ribose 5-phosphate isomerase (rpia-1) from Caenorhabditis elegans.